Consider the following 146-residue polypeptide: Metallothiol transferase FosB (146 aa).

Residues 4–120 enclose the VOC domain; the sequence is GINHMTFSVS…DGHLLEVHTG (117 aa). The Mg(2+) site is built by His7, His66, and Glu116. Glu116 functions as the Proton donor/acceptor in the catalytic mechanism.

This sequence belongs to the fosfomycin resistance protein family. FosB subfamily. In terms of assembly, homodimer. It depends on Mg(2+) as a cofactor.

Its subcellular location is the cytoplasm. Its function is as follows. Metallothiol transferase which confers resistance to fosfomycin by catalyzing the addition of a thiol cofactor to fosfomycin. L-cysteine is probably the physiological thiol donor. In Shouchella clausii (strain KSM-K16) (Alkalihalobacillus clausii), this protein is Metallothiol transferase FosB.